A 458-amino-acid chain; its full sequence is Bifunctional protein GlmU (458 aa).

Residues 1 to 232 (MISPLSVIIL…TFEIEGVNNR (232 aa)) are pyrophosphorylase. Residues 10–13 (LAAG), K24, Q79, 84–85 (GT), 106–108 (YGD), G142, E157, N172, and N230 contribute to the UDP-N-acetyl-alpha-D-glucosamine site. Residue D108 coordinates Mg(2+). Position 230 (N230) interacts with Mg(2+). The segment at 233 to 253 (QQLASLERTWQGKLVADLQEA) is linker. Residues 254-458 (GVQFADPTRV…KDNFQRPTKK (205 aa)) form an N-acetyltransferase region. The UDP-N-acetyl-alpha-D-glucosamine site is built by R336 and K354. Catalysis depends on H366, which acts as the Proton acceptor. UDP-N-acetyl-alpha-D-glucosamine-binding residues include Y369 and N380. Residues A383, 389–390 (NY), S408, A426, and R443 each bind acetyl-CoA.

The protein in the N-terminal section; belongs to the N-acetylglucosamine-1-phosphate uridyltransferase family. This sequence in the C-terminal section; belongs to the transferase hexapeptide repeat family. Homotrimer. Requires Mg(2+) as cofactor.

It localises to the cytoplasm. The catalysed reaction is alpha-D-glucosamine 1-phosphate + acetyl-CoA = N-acetyl-alpha-D-glucosamine 1-phosphate + CoA + H(+). The enzyme catalyses N-acetyl-alpha-D-glucosamine 1-phosphate + UTP + H(+) = UDP-N-acetyl-alpha-D-glucosamine + diphosphate. The protein operates within nucleotide-sugar biosynthesis; UDP-N-acetyl-alpha-D-glucosamine biosynthesis; N-acetyl-alpha-D-glucosamine 1-phosphate from alpha-D-glucosamine 6-phosphate (route II): step 2/2. It functions in the pathway nucleotide-sugar biosynthesis; UDP-N-acetyl-alpha-D-glucosamine biosynthesis; UDP-N-acetyl-alpha-D-glucosamine from N-acetyl-alpha-D-glucosamine 1-phosphate: step 1/1. Its pathway is bacterial outer membrane biogenesis; LPS lipid A biosynthesis. Catalyzes the last two sequential reactions in the de novo biosynthetic pathway for UDP-N-acetylglucosamine (UDP-GlcNAc). The C-terminal domain catalyzes the transfer of acetyl group from acetyl coenzyme A to glucosamine-1-phosphate (GlcN-1-P) to produce N-acetylglucosamine-1-phosphate (GlcNAc-1-P), which is converted into UDP-GlcNAc by the transfer of uridine 5-monophosphate (from uridine 5-triphosphate), a reaction catalyzed by the N-terminal domain. The protein is Bifunctional protein GlmU of Psychrobacter arcticus (strain DSM 17307 / VKM B-2377 / 273-4).